Reading from the N-terminus, the 477-residue chain is Ribulose bisphosphate carboxylase large chain (477 aa).

The propeptide occupies 1–2; that stretch reads MS. At Pro3 the chain carries N-acetylproline. Lys14 carries the N6,N6,N6-trimethyllysine modification. Substrate contacts are provided by Asn123 and Thr173. Lys175 serves as the catalytic Proton acceptor. Lys177 is a substrate binding site. The Mg(2+) site is built by Lys201, Asp203, and Glu204. Lys201 is modified (N6-carboxylysine). Catalysis depends on His294, which acts as the Proton acceptor. Residues Arg295, His327, and Ser379 each contribute to the substrate site.

Belongs to the RuBisCO large chain family. Type I subfamily. In terms of assembly, heterohexadecamer of 8 large chains and 8 small chains; disulfide-linked. The disulfide link is formed within the large subunit homodimers. It depends on Mg(2+) as a cofactor. In terms of processing, the disulfide bond which can form in the large chain dimeric partners within the hexadecamer appears to be associated with oxidative stress and protein turnover.

Its subcellular location is the plastid. The protein resides in the chloroplast. The catalysed reaction is 2 (2R)-3-phosphoglycerate + 2 H(+) = D-ribulose 1,5-bisphosphate + CO2 + H2O. The enzyme catalyses D-ribulose 1,5-bisphosphate + O2 = 2-phosphoglycolate + (2R)-3-phosphoglycerate + 2 H(+). Functionally, ruBisCO catalyzes two reactions: the carboxylation of D-ribulose 1,5-bisphosphate, the primary event in carbon dioxide fixation, as well as the oxidative fragmentation of the pentose substrate in the photorespiration process. Both reactions occur simultaneously and in competition at the same active site. This is Ribulose bisphosphate carboxylase large chain from Nicotiana tomentosiformis (Tobacco).